The primary structure comprises 868 residues: V-set and immunoglobulin domain-containing protein 10-like (868 aa).

The signal sequence occupies residues 1 to 27; sequence MGLSWALLPFLLLAFRAELLALQPALG. Residues 26–52 are compositionally biased toward low complexity; sequence LGSQPPSASSSHSMGSSRDFVSNVSSS. The disordered stretch occupies residues 26-82; sequence LGSQPPSASSSHSMGSSRDFVSNVSSSQHPQPPGSEASAGIPDSNRFPQGLNSSHVP. The Extracellular segment spans residues 28 to 763; the sequence is SQPPSASSSH…QAGSDLSPGA (736 aa). Residues asparagine 48, asparagine 77, and asparagine 88 are each glycosylated (N-linked (GlcNAc...) asparagine). A compositionally biased stretch (polar residues) spans 71–80; it reads RFPQGLNSSH. Disordered stretches follow at residues 96 to 154 and 323 to 342; these read LSPD…SGSK and WSRD…EPPR. Polar residues-rich tracts occupy residues 99–108 and 133–143; these read DVTSSETPPS and PASQISVQTPD. Ig-like C2-type domains are found at residues 289–381 and 389–474; these read PQLS…ADVS and PVIR…SVFN. A disulfide bridge connects residues cysteine 311 and cysteine 365. The N-linked (GlcNAc...) asparagine glycan is linked to asparagine 410. Cysteine 415 and cysteine 458 are disulfide-bonded. 3 N-linked (GlcNAc...) asparagine glycosylation sites follow: asparagine 474, asparagine 628, and asparagine 637. A helical transmembrane segment spans residues 764–784; the sequence is IAGIVLGSLLGLALLAGLLIL. Residues 785–868 are Cytoplasmic-facing; that stretch reads CICCLRRYPG…PWTVRAATQV (84 aa).

The protein resides in the membrane. The sequence is that of V-set and immunoglobulin domain-containing protein 10-like (Vsig10l) from Mus musculus (Mouse).